The primary structure comprises 145 residues: 3-dehydroquinate dehydratase (145 aa).

Tyr22 serves as the catalytic Proton acceptor. Asn71, His77, and Asp84 together coordinate substrate. The Proton donor role is filled by His97. Residues 98–99 and Arg108 contribute to the substrate site; that span reads IS.

It belongs to the type-II 3-dehydroquinase family. In terms of assembly, homododecamer.

It catalyses the reaction 3-dehydroquinate = 3-dehydroshikimate + H2O. It functions in the pathway metabolic intermediate biosynthesis; chorismate biosynthesis; chorismate from D-erythrose 4-phosphate and phosphoenolpyruvate: step 3/7. Functionally, catalyzes a trans-dehydration via an enolate intermediate. The sequence is that of 3-dehydroquinate dehydratase from Exiguobacterium sp. (strain ATCC BAA-1283 / AT1b).